Consider the following 863-residue polypeptide: Ubiquitin carboxyl-terminal hydrolase 13 (863 aa).

Ser114 is subject to Phosphoserine. Position 122 is a phosphothreonine (Thr122). The segment at 187–295 (PVSKYANNLT…KHLAHFGIDM (109 aa)) adopts a UBP-type; degenerate zinc-finger fold. Zn(2+) is bound by residues Cys211, Cys214, Cys231, and His244. Lys311 is covalently cross-linked (Glycyl lysine isopeptide (Lys-Gly) (interchain with G-Cter in SUMO2)). Residues 336-861 (TGLKNLGNSC…LGYMYFYRRI (526 aa)) enclose the USP domain. Cys345 acts as the Nucleophile in catalysis. Lys405 is covalently cross-linked (Glycyl lysine isopeptide (Lys-Gly) (interchain with G-Cter in SUMO2)). 2 UBA domains span residues 652–693 (DIDE…IVVH) and 727–767 (QPPE…IFSH). The active-site Proton acceptor is His823.

It belongs to the peptidase C19 family. As to quaternary structure, interacts with UFD1. Interacts (via UBA domains) with SIAH2 (when ubiquitinated). Interacts with BAG6; the interaction is direct and may mediate UBL4A deubiquitination. Interacts (via UBA 2 domain) with AMFR; the interaction is direct. Interacts with UBL4A; may be indirect via BAG6. Interacts with NEDD4.

The protein localises to the cytoplasm. It carries out the reaction Thiol-dependent hydrolysis of ester, thioester, amide, peptide and isopeptide bonds formed by the C-terminal Gly of ubiquitin (a 76-residue protein attached to proteins as an intracellular targeting signal).. Its activity is regulated as follows. Specifically inhibited by spautin-1 (specific and potent autophagy inhibitor-1), a derivative of MBCQ that binds to USP13 and inhibits deubiquitinase activity. Regulated by PIK3C3/VPS34-containing complexes. The weak deubiquitinase activity in vitro suggests the existence of some mechanism that activates the enzyme. Its function is as follows. Deubiquitinase that mediates deubiquitination of target proteins such as BECN1, MITF, SKP2 and USP10 and is involved in various processes such as autophagy, endoplasmic reticulum-associated degradation (ERAD), cell cycle progression or DNA damage response. Component of a regulatory loop that controls autophagy and p53/TP53 levels: mediates deubiquitination of BECN1, a key regulator of autophagy, leading to stabilize the PIK3C3/VPS34-containing complexes. Alternatively, forms with NEDD4 a deubiquitination complex, which subsequently stabilizes VPS34 to promote autophagy. Also deubiquitinates USP10, an essential regulator of p53/TP53 stability. In turn, PIK3C3/VPS34-containing complexes regulate USP13 stability, suggesting the existence of a regulatory system by which PIK3C3/VPS34-containing complexes regulate p53/TP53 protein levels via USP10 and USP13. Recruited by nuclear UFD1 and mediates deubiquitination of SKP2, thereby regulating endoplasmic reticulum-associated degradation (ERAD). Also regulates ERAD through the deubiquitination of UBL4A a component of the BAG6/BAT3 complex. Mediates stabilization of SIAH2 independently of deubiquitinase activity: binds ubiquitinated SIAH2 and acts by impairing SIAH2 autoubiquitination. Regulates the cell cycle progression by stabilizing cell cycle proteins such as SKP2 and AURKB. In addition, plays an important role in maintaining genomic stability and in DNA replication checkpoint activation via regulation of RAP80 and TOPBP1. Deubiquitinates the multifunctional protein HMGB1 and subsequently drives its nucleocytoplasmic localization and its secretion. Positively regulates type I and type II interferon signalings by deubiquitinating STAT1 but negatively regulates antiviral response by deubiquitinating STING1. The polypeptide is Ubiquitin carboxyl-terminal hydrolase 13 (USP13) (Bos taurus (Bovine)).